The chain runs to 386 residues: Probable protein phosphatase 2C 36 (386 aa).

The PPM-type phosphatase domain maps to 60-363 (ELSVAVVQGN…DDITVIVLFI (304 aa)). The Mn(2+) site is built by Asp94, Gly95, Asp295, and Asp354.

This sequence belongs to the PP2C family. It depends on Mg(2+) as a cofactor. Requires Mn(2+) as cofactor.

The enzyme catalyses O-phospho-L-seryl-[protein] + H2O = L-seryl-[protein] + phosphate. It carries out the reaction O-phospho-L-threonyl-[protein] + H2O = L-threonyl-[protein] + phosphate. This Oryza sativa subsp. japonica (Rice) protein is Probable protein phosphatase 2C 36.